Here is a 70-residue protein sequence, read N- to C-terminus: MFLEELKPVTRELCQQPIAFAGGFVSGVLRLKLTDDPLKKWLQKQGVTDFSGADINQTAQDNRPQSIDID.

It belongs to the UPF0426 family.

The chain is UPF0426 protein ssl0294 from Synechocystis sp. (strain ATCC 27184 / PCC 6803 / Kazusa).